The chain runs to 163 residues: Epithelial membrane protein 3 (163 aa).

Residues 4-24 (LLLVVSALHILILVLLFVATL) form a helical membrane-spanning segment. 2 N-linked (GlcNAc...) asparagine glycosylation sites follow: asparagine 46 and asparagine 56. Helical transmembrane passes span 66–86 (VQAL…LFMF), 100–120 (TGLC…IYAI), and 139–159 (FALA…YIHL).

This sequence belongs to the PMP-22/EMP/MP20 family.

It is found in the membrane. In terms of biological role, probably involved in cell proliferation and cell-cell interactions. In Mus musculus (Mouse), this protein is Epithelial membrane protein 3 (Emp3).